The sequence spans 397 residues: Tryptophan synthase beta chain (397 aa).

The residue at position 88 (Lys-88) is an N6-(pyridoxal phosphate)lysine.

The protein belongs to the TrpB family. Tetramer of two alpha and two beta chains. The cofactor is pyridoxal 5'-phosphate.

The enzyme catalyses (1S,2R)-1-C-(indol-3-yl)glycerol 3-phosphate + L-serine = D-glyceraldehyde 3-phosphate + L-tryptophan + H2O. It functions in the pathway amino-acid biosynthesis; L-tryptophan biosynthesis; L-tryptophan from chorismate: step 5/5. In terms of biological role, the beta subunit is responsible for the synthesis of L-tryptophan from indole and L-serine. This is Tryptophan synthase beta chain from Shewanella amazonensis (strain ATCC BAA-1098 / SB2B).